Reading from the N-terminus, the 376-residue chain is Heterodimeric geranylgeranyl pyrophosphate synthase large subunit 2 (376 aa).

The signal sequence occupies residues 1–24; that stretch reads MEPQILFLYLSLFILSLNFFFTNL. Residues Lys125, Arg128, and His157 each contribute to the isopentenyl diphosphate site. Residues Asp164 and Asp170 each coordinate Mg(2+). Position 175 (Arg175) interacts with dimethylallyl diphosphate. Arg176 lines the isopentenyl diphosphate pocket. Residues Lys261, Thr262, Gln299, Lys316, and Lys326 each coordinate dimethylallyl diphosphate.

The protein belongs to the FPP/GGPP synthase family. In terms of assembly, monomer. Part of a heterodimeric geranyl(geranyl)diphosphate synthase. Interacts with GGR. The cofactor is Mg(2+). As to expression, mainly expressed in flowers.

It localises to the endoplasmic reticulum. It catalyses the reaction isopentenyl diphosphate + dimethylallyl diphosphate = (2E)-geranyl diphosphate + diphosphate. It carries out the reaction isopentenyl diphosphate + (2E)-geranyl diphosphate = (2E,6E)-farnesyl diphosphate + diphosphate. The catalysed reaction is isopentenyl diphosphate + (2E,6E)-farnesyl diphosphate = (2E,6E,10E)-geranylgeranyl diphosphate + diphosphate. The protein operates within isoprenoid biosynthesis; farnesyl diphosphate biosynthesis; farnesyl diphosphate from geranyl diphosphate and isopentenyl diphosphate: step 1/1. It functions in the pathway isoprenoid biosynthesis; geranyl diphosphate biosynthesis; geranyl diphosphate from dimethylallyl diphosphate and isopentenyl diphosphate: step 1/1. It participates in isoprenoid biosynthesis; geranylgeranyl diphosphate biosynthesis; geranylgeranyl diphosphate from farnesyl diphosphate and isopentenyl diphosphate: step 1/1. Heterodimeric geranyl(geranyl)-diphosphate (GPP) synthase large subunit. In vitro, the large subunit catalyzes mainly the trans-addition of the three molecules of IPP onto DMAPP to form geranylgeranyl pyrophosphate while the small subunit alone is inactive. Upon association of the two subunits, the product profile is not changed. The chain is Heterodimeric geranylgeranyl pyrophosphate synthase large subunit 2 (GGPPS2) from Arabidopsis thaliana (Mouse-ear cress).